The primary structure comprises 271 residues: ELH (271 aa).

The N-terminal stretch at 1 to 28 (MKRPNNRPTNTMSLILCLTLSSLCVSSQ) is a signal peptide. 2 propeptides span residues 29-95 (SASV…NEKR) and 162-184 (AAGG…RRKR). Positions 162 to 190 (AAGGMEQSEGQNPETESHSRRKRSVLTPS) are disordered. Lysine 241 is modified (lysine amide).

The protein belongs to the molluscan ELH family. As to expression, bag cell neurons.

It is found in the secreted. ELH acts as a neurotransmitter locally, upon neurons of the abdominal ganglion and as a hormone by diffusing into the circulating hemolymph and modulating the activity of other organs. It specifically causes contraction of smooth muscle in the ovotestis and expulsion of the egg string. In terms of biological role, alpha-BCP decreases the activity of a cluster of neurons in the left upper quadrant of the abdominal ganglion. Its function is as follows. Beta-BCP specifically excites 2 neurons, L1 and R1, in the abdominal ganglion. This is ELH from Aplysia californica (California sea hare).